Here is a 148-residue protein sequence, read N- to C-terminus: Ponticulin-like protein D (148 aa).

The signal sequence occupies residues 1-20 (MLLNKSLLLLVAFVFAIVSA). Asn-67 is a glycosylation site (N-linked (GlcNAc...) asparagine). Asp-125 is lipidated: GPI-like-anchor amidated aspartate. Positions 126–148 (SSAAATMIASFSAILIALLFALL) are cleaved as a propeptide — removed in mature form.

Belongs to the ponticulin family. The GPI-like-anchor contains a phosphoceramide group, rather than a phosphatidyl group.

It is found in the cell membrane. In Dictyostelium discoideum (Social amoeba), this protein is Ponticulin-like protein D (ponD).